Consider the following 107-residue polypeptide: Nucleoid-associated protein YaaK (107 aa).

Positions methionine 1–lysine 24 are disordered. Residues methionine 8–lysine 17 are compositionally biased toward low complexity.

This sequence belongs to the YbaB/EbfC family. In terms of assembly, homodimer.

It is found in the cytoplasm. Its subcellular location is the nucleoid. Functionally, binds to DNA and alters its conformation. May be involved in regulation of gene expression, nucleoid organization and DNA protection. The polypeptide is Nucleoid-associated protein YaaK (yaaK) (Bacillus subtilis (strain 168)).